We begin with the raw amino-acid sequence, 722 residues long: Serine/threonine-protein kinase MARK2 (722 aa).

The disordered stretch occupies residues 1-46; it reads MSSARTPLPTLNERDTEQPTLGHLDSKPSSKSNMLRGRNSATSADE. Polar residues predominate over residues 27 to 45; sequence KPSSKSNMLRGRNSATSAD. Phosphoserine is present on S40. Residues 53 to 304 enclose the Protein kinase domain; the sequence is YRLLKTIGKG…LEQIMKDRWM (252 aa). T58 bears the Phosphothreonine; by autocatalysis mark. ATP-binding positions include 59 to 67 and K82; that span reads IGKGNFAKV. Phosphoserine; by CaMK1 occurs at positions 91, 92, and 93. The active-site Proton acceptor is D175. A Phosphothreonine; by LKB1 and TAOK1 modification is found at T208. The residue at position 212 (S212) is a Phosphoserine; by GSK3-beta. The residue at position 274 (S274) is a Phosphoserine; by autocatalysis. Position 275 is a phosphothreonine; by autocatalysis (T275). T294 carries the post-translational modification Phosphothreonine; by CaMK1. Residues 323-362 form the UBA domain; that stretch reads YKDPRRTELMVSMGYTREEIQDSLVGQRYNEVMATYLLLG. A disordered region spans residues 373 to 576; that stretch reads ITLKPRPSAD…SQGRRGASGS (204 aa). Residues S408 and S409 each carry the phosphoserine modification. Residues 417 to 431 show a composition bias toward polar residues; it reads PTSNSYSKKTQSNNA. Residues 432–442 are compositionally biased toward basic and acidic residues; it reads ENKRPEEETGR. At S453 the chain carries Phosphoserine. Position 464 is a phosphothreonine (T464). The span at 464-483 shows a compositional bias: polar residues; it reads TPTPSTNSVLSTSTNRSRNS. Phosphoserine is present on residues S483 and S490. Residues 492–505 show a composition bias toward polar residues; sequence GQASIQNGKDSTAP. Residues 511–524 show a composition bias toward low complexity; it reads ASPSAHNISSSSGA. Phosphoserine occurs at positions 512, 514, and 535. T539 carries the phosphothreonine; by PKC/PRKCZ modification. S562 and S656 each carry phosphoserine. The KA1 domain occupies 673–722; it reads TPGHENFVQWEMEVCKLPRLSLNGVRFKRISGTSMAFKNIASKIANELKL.

The protein belongs to the protein kinase superfamily. CAMK Ser/Thr protein kinase family. SNF1 subfamily. Homodimer. Interacts (when phosphorylated at Thr-539) with YWHAZ. Interacts with MTCL1; the interaction is direct and increases MARK2 microtubule-binding ability. Interacts with PAK5; leading to inhibit the protein kinase activity. Interacts with MAPT/TAU. Interacts with YWHAB, YWHAG and YWHAQ. The cofactor is Mg(2+). Autophosphorylated. Phosphorylated at Thr-208 by STK11/LKB1 in complex with STE20-related adapter-alpha (STRADA) pseudo kinase and CAB39. Phosphorylation at Thr-208 by TAOK1 activates the kinase activity, leading to phosphorylation and detachment of MAPT/TAU from microtubules. Phosphorylation at Ser-212 by GSK3-beta (GSK3B) inhibits the kinase activity. Phosphorylation by CaMK1 promotes activity and is required to promote neurite outgrowth. Phosphorylation at Thr-539 by PRKCZ/aPKC in polarized epithelial cells inhibits the kinase activity and promotes binding to 14-3-3 protein YWHAZ, leading to relocation from cell membrane to cytoplasm.

The protein localises to the cell membrane. It is found in the lateral cell membrane. The protein resides in the cytoplasm. It localises to the cytoskeleton. Its subcellular location is the cell projection. The protein localises to the dendrite. It carries out the reaction L-seryl-[protein] + ATP = O-phospho-L-seryl-[protein] + ADP + H(+). The catalysed reaction is L-threonyl-[protein] + ATP = O-phospho-L-threonyl-[protein] + ADP + H(+). It catalyses the reaction L-seryl-[tau protein] + ATP = O-phospho-L-seryl-[tau protein] + ADP + H(+). The enzyme catalyses L-threonyl-[tau protein] + ATP = O-phospho-L-threonyl-[tau protein] + ADP + H(+). With respect to regulation, inhibited by hymenialdisine. Activated by phosphorylation on Thr-208 by STK11/LKB1 and TAOK1. Inhibited by phosphorylation at Ser-212 or Thr-539. Inhibited by PAK5; inhibition is independent of the kinase activity of PAK5. Functionally, serine/threonine-protein kinase. Involved in cell polarity and microtubule dynamics regulation. Phosphorylates CRTC2/TORC2, DCX, HDAC7, KIF13B, MAP2, MAP4 and RAB11FIP2. Phosphorylates the microtubule-associated protein MAPT/TAU. Plays a key role in cell polarity by phosphorylating the microtubule-associated proteins MAP2, MAP4 and MAPT/TAU at KXGS motifs, causing detachment from microtubules, and their disassembly. Regulates epithelial cell polarity by phosphorylating RAB11FIP2. Involved in the regulation of neuronal migration through its dual activities in regulating cellular polarity and microtubule dynamics, possibly by phosphorylating and regulating DCX. Regulates axogenesis by phosphorylating KIF13B, promoting interaction between KIF13B and 14-3-3 and inhibiting microtubule-dependent accumulation of KIF13B. Also required for neurite outgrowth and establishment of neuronal polarity. Regulates localization and activity of some histone deacetylases by mediating phosphorylation of HDAC7, promoting subsequent interaction between HDAC7 and 14-3-3 and export from the nucleus. Also acts as a positive regulator of the Wnt signaling pathway, probably by mediating phosphorylation of dishevelled proteins (DVL1, DVL2 and/or DVL3). Modulates the developmental decision to build a columnar versus a hepatic epithelial cell apparently by promoting a switch from a direct to a transcytotic mode of apical protein delivery. Essential for the asymmetric development of membrane domains of polarized epithelial cells. The chain is Serine/threonine-protein kinase MARK2 from Rattus norvegicus (Rat).